Here is a 437-residue protein sequence, read N- to C-terminus: Proton/glutamate-aspartate symporter (437 aa).

Residues 1–5 are Cytoplasmic-facing; it reads MKNIK. A helical membrane pass occupies residues 6-26; that stretch reads FSLAWQILFAMVLGILLGSYL. The Periplasmic segment spans residues 27 to 50; sequence HYHSDSRDWLVVNLLSPAGDIFIH. A helical membrane pass occupies residues 51-71; it reads LIKMIVVPIVISTLVVGIAGV. Topologically, residues 72 to 84 are cytoplasmic; the sequence is GDAKQLGRIGAKT. The helical transmembrane segment at 85–105 threads the bilayer; the sequence is IIYFEVITTVAIILGITLANV. Residues 106-159 are Periplasmic-facing; it reads FQPGAGVDMSQLATVDISKYQSTTEAVQSSSHGIMGTILSLVPTNIVASMAKGE. Residues 160–180 traverse the membrane as a helical segment; it reads MLPIIFFSVLFGLGLSSLPAT. Over 181-210 the chain is Cytoplasmic; it reads HREPLVTVFRSISETMFKVTHMVMRYAPVG. A helical membrane pass occupies residues 211 to 231; sequence VFALIAVTVANFGFSSLWPLA. Position 232 (K232) is a topological domain, periplasmic. The chain crosses the membrane as a helical span at residues 233–253; the sequence is LVLLVHFAILFFALVVLGIVA. Topologically, residues 254 to 292 are cytoplasmic; the sequence is RLCGLSVWILIRILKDELILAYSTASSESVLPRIIEKME. A helical membrane pass occupies residues 293 to 313; that stretch reads AYGAPVSITSFVVPTGYSFNL. At 314 to 324 the chain is on the periplasmic side; sequence DGSTLYQSIAA. The helical transmembrane segment at 325 to 345 threads the bilayer; it reads IFIAQLYGIDLSIWQEIILVL. At 346–361 the chain is on the cytoplasmic side; sequence TLMVTSKGIAGVPGVS. The helical transmembrane segment at 362 to 382 threads the bilayer; it reads FVVLLATLGSVGIPLEGLAFI. The Periplasmic segment spans residues 383–387; it reads AGVDR. Residues 388–408 form a helical membrane-spanning segment; the sequence is ILDMARTALNVVGNALAVLVI. Residues 409 to 437 are Cytoplasmic-facing; the sequence is AKWEHKFDRKKALAYEREVLGKFDKTADQ.

It belongs to the dicarboxylate/amino acid:cation symporter (DAACS) (TC 2.A.23) family. GltP subfamily.

The protein localises to the cell inner membrane. With respect to regulation, glutamate uptake is inhibited by L-cysteate and beta-hydroxyaspartate. Inhibited by the uncoupler carbonylcyanide m-chlorophenylhydrazone (CCCP). In terms of biological role, catalyzes the proton-dependent, binding-protein-independent transport of glutamate and aspartate. The protein is Proton/glutamate-aspartate symporter of Escherichia coli (strain K12).